The primary structure comprises 376 residues: Growth/differentiation factor 8 (376 aa).

The N-terminal stretch at 1-24 (MMQKLQMYVYIYLFMLIAAGPVDL) is a signal peptide. Positions 25-267 (NEGSEREENV…VTDTPKRSRR (243 aa)) are excised as a propeptide. Residue Asn72 is glycosylated (N-linked (GlcNAc...) asparagine). 4 disulfide bridges follow: Cys273-Cys283, Cys282-Cys341, Cys310-Cys373, and Cys314-Cys375.

The protein belongs to the TGF-beta family. In terms of assembly, homodimer; disulfide-linked. Interacts with WFIKKN2, leading to inhibit its activity. Interacts with FSTL3. Synthesized as large precursor molecule that undergoes proteolytic cleavage to generate an N-terminal propeptide and a disulfide linked C-terminal dimer, which is the biologically active molecule. The circulating form consists of a latent complex of the C-terminal dimer and other proteins, including its propeptide, which maintain the C-terminal dimer in a latent, inactive state. Ligand activation requires additional cleavage of the prodomain by a tolloid-like metalloproteinase. In terms of tissue distribution, expressed specifically in developing and adult skeletal muscle. Weak expression in adipose tissue.

The protein resides in the secreted. Functionally, acts specifically as a negative regulator of skeletal muscle growth. The polypeptide is Growth/differentiation factor 8 (Mstn) (Mus musculus (Mouse)).